Reading from the N-terminus, the 621-residue chain is Stimulated by retinoic acid gene 6 protein-like (621 aa).

Residues 1 to 21 (MLAASTRTRQINITCDNPVDR) lie on the Extracellular side of the membrane. N-linked (GlcNAc...) asparagine glycosylation occurs at N12. The helical transmembrane segment at 22 to 42 (EVFLHYSLIPSLCIILVLSFL) threads the bilayer. At 43–53 (QRREHRRQRDD) the chain is on the cytoplasmic side. The chain crosses the membrane as a helical span at residues 54-74 (TSYLLGNHFGIIVPLDFVGTF). The Extracellular portion of the chain corresponds to 75 to 110 (SNRWSYGAAFGATANKVMFLFSEGYQPLTVPQWAQA). Residues 111–131 (FVLFIGGMEVGLSYFPFFACL) traverse the membrane as a helical segment. Topologically, residues 132 to 137 (SSEFQL) are cytoplasmic. Residues 138–158 (VSSILGFSYSLTWFVVTVLQI) form a helical membrane-spanning segment. Residues 159–173 (SQCPHGQFLGRFETL) lie on the Extracellular side of the membrane. Residues 174-194 (VFYWPSLLCLGFLLGRFLHMF) traverse the membrane as a helical segment. At 195–258 (LKALPVHLGL…CFQFPSRMVG (64 aa)) the chain is on the cytoplasmic side. The chain crosses the membrane as a helical span at residues 259 to 279 (TLLLAFICLYLFIVIEFCVFL). The Extracellular portion of the chain corresponds to 280-321 (HVRDKLDMFEDKLESYLTHMNETGTLTPIILQVKELISVTKG). The chain crosses the membrane as a helical span at residues 322-342 (VWVVTILPAALTCVTYLFHIL). At 343 to 383 (ACYRKHMKRLWAGDKHFLPQKFHSPSSAASVVAIARYSGWQ) the chain is on the cytoplasmic side. A helical membrane pass occupies residues 384-404 (IAYILWGYLIIHVVQSLCGVM). The Extracellular segment spans residues 405–424 (LMYGLVLPIIHHRGLEMLQG). Residues 425–445 (FGLGVLTLSIVVGLIILQVWI) form a helical membrane-spanning segment. Over 446–476 (AGTFFLQPKLGTSDKQKPLALNNRRAFHNFN) the chain is Cytoplasmic. Residues 477–497 (YFLFFYNVLLGLGACLSRLLI) form a helical membrane-spanning segment. Over 498 to 621 (SCLLGTWLIA…TQILLTCSDC (124 aa)) the chain is Extracellular. The residue at position 612 (T612) is a Phosphothreonine.

Post-translationally, glycosylated. Highly expressed in liver and small intestine. Also expressed in spleen, kidney, colon, stomach, placenta, adipose tissue and isolated adipocytes.

The protein localises to the cell membrane. Acts as a high-affinity cell-surface receptor for retinol-binding protein RBP4 and mediates RBP4-dependent retinol uptake in the liver. The protein is Stimulated by retinoic acid gene 6 protein-like of Mus musculus (Mouse).